The sequence spans 148 residues: Putative nickel-responsive regulator (148 aa).

Residues H88, H99, H101, and C107 each coordinate Ni(2+).

It belongs to the transcriptional regulatory CopG/NikR family. Ni(2+) is required as a cofactor.

Its function is as follows. Transcriptional regulator. The chain is Putative nickel-responsive regulator from Helicobacter pylori (strain P12).